A 178-amino-acid chain; its full sequence is Probable DNA-directed RNA polymerase subunit delta (178 aa).

The region spanning 14–81 (KSFIDMAYTL…GENLWGLRDW (68 aa)) is the HTH HARE-type domain. Residues 114–178 (LGDDDADEDD…AFEDAEDFND (65 aa)) form a disordered region. Positions 116–178 (DDDADEDDDI…AFEDAEDFND (63 aa)) are enriched in acidic residues.

It belongs to the RpoE family. As to quaternary structure, RNAP is composed of a core of 2 alpha, a beta and a beta' subunits. The core is associated with a delta subunit and one of several sigma factors.

Functionally, participates in both the initiation and recycling phases of transcription. In the presence of the delta subunit, RNAP displays an increased specificity of transcription, a decreased affinity for nucleic acids, and an increased efficiency of RNA synthesis because of enhanced recycling. The polypeptide is Probable DNA-directed RNA polymerase subunit delta (Staphylococcus epidermidis (strain ATCC 35984 / DSM 28319 / BCRC 17069 / CCUG 31568 / BM 3577 / RP62A)).